Reading from the N-terminus, the 197-residue chain is Protein TIFY 9 (197 aa).

Residues 57-73 are compositionally biased toward polar residues; the sequence is STGNNSDSSAKSRSVPS. The interval 57-84 is disordered; the sequence is STGNNSDSSAKSRSVPSTPREDQPQIPI. The Tify domain occupies 98–132; sequence LVSGTVPMTIFYNGSVSVFQVSRNKAGEIMKVANE. Residues 168–193 carry the Jas motif; sequence PIARRKSLQRFLEKRKERLVSTSPYY. The Nuclear localization signal motif lies at 170 to 177; sequence ARRKSLQR.

The protein belongs to the TIFY/JAZ family. In terms of assembly, homo- and heterodimer. Interacts with MYC2, MYC3, MYC4, AFPH2/NINJA, TIFY10A/JAZ1, TIFY10B/JAZ2, TIFY6B/JAZ3, TIFY6A/JAZ4, TIFY11B/JAZ6, TIFY5A/JAZ8, TIFY7/JAZ9, TIFY3A/JAZ11 and TIFY3B/JAZ12. Isoform 1 and isoform 2 interact with COI1. Isoform 3 does not interact with COI1. Interacts with RHD6 and RSL1. Post-translationally, ubiquitinated. Targeted for degradation by the SCF(COI1) E3 ubiquitin ligase-proteasome pathway during jasmonate signaling.

It localises to the nucleus. Functionally, repressor of jasmonate (JA) responses that lacks the entire Jas domain and possesses severe JA insensitivity and resistance to JA-induced degradation. Acts as an endogenous repressor of JA signal output in JA-stimulated cells. Modulator of JA-controlled growth inhibition in response to wounding. Repressor of jasmonate (JA) responses that lacks part of the Jas domain and possesses JA insensitivity and partial resistance to JA-induced degradation. Its function is as follows. Repressor of jasmonate (JA) responses. Interacts with and suppresses RHD6 and RSL1 transcription factor activities to negatively regulate jasmonate-stimulated root hair development. In Arabidopsis thaliana (Mouse-ear cress), this protein is Protein TIFY 9 (TIFY9).